Consider the following 606-residue polypeptide: Pickpocket protein 28 (606 aa).

The tract at residues 1-26 (MRTLTESRRRQSGSSGCKKDSESDDD) is disordered. 2 helical membrane-spanning segments follow: residues 66–86 (IFFG…ISNV) and 490–510 (GLLG…FFYI).

Belongs to the amiloride-sensitive sodium channel (TC 1.A.6) family. Expressed in water-sensing neurons in taste bristles on the proboscis but not in carbonation-sensing taste peg neurons (at protein level). Expressed in the tracheal system.

Its subcellular location is the cell membrane. Its function is as follows. Osmosensitive ion channel that mediates the cellular and behavioral response to water. Plays an essential role in gustatory water reception. Part of a complex that plays a role in tracheal liquid clearance. Probable role in sodium transport. The protein is Pickpocket protein 28 (ppk28) of Drosophila melanogaster (Fruit fly).